Here is a 158-residue protein sequence, read N- to C-terminus: Endoribonuclease YbeY (158 aa).

Zn(2+) is bound by residues histidine 118, histidine 122, and histidine 128.

It belongs to the endoribonuclease YbeY family. The cofactor is Zn(2+).

The protein resides in the cytoplasm. In terms of biological role, single strand-specific metallo-endoribonuclease involved in late-stage 70S ribosome quality control and in maturation of the 3' terminus of the 16S rRNA. The sequence is that of Endoribonuclease YbeY from Alteromonas mediterranea (strain DSM 17117 / CIP 110805 / LMG 28347 / Deep ecotype).